The primary structure comprises 87 residues: CRISPR-associated endoribonuclease Cas2 (87 aa).

Asp8 is a Mg(2+) binding site.

Belongs to the CRISPR-associated endoribonuclease Cas2 protein family. In terms of assembly, homodimer, forms a heterotetramer with a Cas1 homodimer. The cofactor is Mg(2+).

Its function is as follows. CRISPR (clustered regularly interspaced short palindromic repeat), is an adaptive immune system that provides protection against mobile genetic elements (viruses, transposable elements and conjugative plasmids). CRISPR clusters contain sequences complementary to antecedent mobile elements and target invading nucleic acids. CRISPR clusters are transcribed and processed into CRISPR RNA (crRNA). Functions as a ssRNA-specific endoribonuclease. Involved in the integration of spacer DNA into the CRISPR cassette. This is CRISPR-associated endoribonuclease Cas2 from Dictyoglomus turgidum (strain DSM 6724 / Z-1310).